Consider the following 166-residue polypeptide: Ribosome maturation factor RimM (166 aa).

Positions 90-165 constitute a PRC barrel domain; the sequence is NDNDAFSIFY…IITLKNIEGL (76 aa).

It belongs to the RimM family. In terms of assembly, binds ribosomal protein uS19.

The protein resides in the cytoplasm. An accessory protein needed during the final step in the assembly of 30S ribosomal subunit, possibly for assembly of the head region. Essential for efficient processing of 16S rRNA. May be needed both before and after RbfA during the maturation of 16S rRNA. It has affinity for free ribosomal 30S subunits but not for 70S ribosomes. This chain is Ribosome maturation factor RimM, found in Mesoplasma florum (strain ATCC 33453 / NBRC 100688 / NCTC 11704 / L1) (Acholeplasma florum).